A 245-amino-acid chain; its full sequence is MSQSGSVLRRNGFTFKQFFVAHDRCAMKVGTDGILLGAWAPVADVKRILDIGTGSGLLALMLAQRTDDNVPIDAVELDAGAAMQAQENVAHSPWPHRITVHTDDIQRWAPRQTVRFDLIISNPPYYEPGVECATPQREQARYTATLDHQTLLAIAADCITEDGFFCVVLPEQIGNAFTQQALNMGWHLRLRTDVAENEARLPHRVLLAFSPQAGECFSDRLVIRGSDQHYSESYTALTQAFYLFM.

It belongs to the methyltransferase superfamily. tRNA (adenine-N(6)-)-methyltransferase family.

The protein resides in the cytoplasm. It catalyses the reaction adenosine(37) in tRNA1(Val) + S-adenosyl-L-methionine = N(6)-methyladenosine(37) in tRNA1(Val) + S-adenosyl-L-homocysteine + H(+). Specifically methylates the adenine in position 37 of tRNA(1)(Val) (anticodon cmo5UAC). This Salmonella paratyphi C (strain RKS4594) protein is tRNA1(Val) (adenine(37)-N6)-methyltransferase.